Consider the following 526-residue polypeptide: GMP synthase [glutamine-hydrolyzing] (526 aa).

A Glutamine amidotransferase type-1 domain is found at 14-208 (SILIVDFGSQ…VHDICGLAGD (195 aa)). C91 serves as the catalytic Nucleophile. Residues H182 and E184 contribute to the active site. Residues 209–401 (WTMAEFRQTK…LGMPDVFVDR (193 aa)) enclose the GMPS ATP-PPase domain. 236–242 (SGGVDSS) contacts ATP.

In terms of assembly, homodimer.

The enzyme catalyses XMP + L-glutamine + ATP + H2O = GMP + L-glutamate + AMP + diphosphate + 2 H(+). Its pathway is purine metabolism; GMP biosynthesis; GMP from XMP (L-Gln route): step 1/1. Catalyzes the synthesis of GMP from XMP. The sequence is that of GMP synthase [glutamine-hydrolyzing] from Zymomonas mobilis subsp. mobilis (strain ATCC 31821 / ZM4 / CP4).